A 265-amino-acid chain; its full sequence is Transcriptional repressor DcmR (265 aa).

Residues 17–36 constitute a DNA-binding region (H-T-H motif); the sequence is LDIKQAASLLNVSEASLRRW.

Monomer.

Transcriptional repressor of the dcmA gene and of its own gene. The polypeptide is Transcriptional repressor DcmR (dcmR) (Methylorubrum extorquens (strain DSM 6343 / CIP 106787 / DM4) (Methylobacterium extorquens)).